Here is a 416-residue protein sequence, read N- to C-terminus: Enterobactin exporter EntS (416 aa).

Topologically, residues 1–21 (MNKQSWLLNLSLLKTHPAFRA) are cytoplasmic. A helical membrane pass occupies residues 22-42 (VFLARFISIVSLGLLGVAVPV). Residues 43–55 (QIQMMTHSTWQVG) lie on the Periplasmic side of the membrane. A helical transmembrane segment spans residues 56–76 (LSVTLTGGAMFVGLMVGGVLA). Topologically, residues 77 to 83 (DRYERKK) are cytoplasmic. Residues 84–104 (VILLARGTCGIGFIGLCLNAL) traverse the membrane as a helical segment. The Periplasmic segment spans residues 105–109 (LPEPS). Residues 110–130 (LLAIYLLGLWDGFFASLGVTA) traverse the membrane as a helical segment. At 131 to 156 (LLAATPALVGRENLMQAGAITMLTVR) the chain is on the cytoplasmic side. Residues 157–177 (LGSVISPMIGGLLLATGGVAW) traverse the membrane as a helical segment. Residue Asn-178 is a topological domain, periplasmic. A helical membrane pass occupies residues 179–199 (YGLAAAGTFITLLPLLSLPAL). The Cytoplasmic portion of the chain corresponds to 200–218 (PPPPQPREHPLKSLLAGFR). A helical membrane pass occupies residues 219 to 239 (FLLASPLVGGIALLGGLLTMA). The Periplasmic portion of the chain corresponds to 240-256 (SAVRVLYPALADNWQMS). A helical transmembrane segment spans residues 257-277 (AAQIGFLYAAIPLGAAIGALT). The Cytoplasmic segment spans residues 278-287 (SGKLAHSARP). Residues 288–307 (GLLMLLSTLGSFLAIGLFGL) traverse the membrane as a helical segment. The Periplasmic segment spans residues 308–313 (MPMWIL). The helical transmembrane segment at 314-336 (GVVCLALFGWLSAVSSLLQYTML) threads the bilayer. Topologically, residues 337–356 (QTQTPEAMLGRINGLWTAQN) are cytoplasmic. Residues 357-377 (VTGDAIGAALLGGLGAMMTPV) form a helical membrane-spanning segment. Residue Ala-378 is a topological domain, periplasmic. Residues 379 to 399 (SASASGFGLLIIGVLLLLVLV) form a helical membrane-spanning segment. Residues 400 to 416 (ELRHFRQTPPQVTASDS) lie on the Cytoplasmic side of the membrane.

The protein belongs to the major facilitator superfamily. EntS (TC 2.A.1.38) family.

It localises to the cell inner membrane. In terms of biological role, component of an export pathway for enterobactin. The protein is Enterobactin exporter EntS of Escherichia coli (strain K12 / MC4100 / BW2952).